The chain runs to 367 residues: Undecaprenyl-phosphate alpha-N-acetylglucosaminyl 1-phosphate transferase (367 aa).

9 consecutive transmembrane segments (helical) span residues 3–23 (LLTALSELISIFLFTTIFIFL), 45–65 (GVIPLVGGISVFAGICFMFGL), 69–89 (YIPHLSLYLICAGVLVFVGAM), 129–149 (WELVLGPFGYFLTLFAVWAAI), 158–178 (IDGLLGGLSSVSFAAMGLILW), 187–207 (MWCFAMIAAILPYIMLNLGIL), 213–233 (VFMGDAGSTLIGFTVIWLLLE), 242–262 (ISPVTALWIIAIPLMDMVAIM), and 318–338 (VPEWVMLVLFLLAFFLYGYCI).

This sequence belongs to the glycosyltransferase 4 family. WecA subfamily. Mg(2+) serves as cofactor. Mn(2+) is required as a cofactor.

The protein localises to the cell inner membrane. The enzyme catalyses di-trans,octa-cis-undecaprenyl phosphate + UDP-N-acetyl-alpha-D-glucosamine = N-acetyl-alpha-D-glucosaminyl-di-trans,octa-cis-undecaprenyl diphosphate + UMP. It functions in the pathway bacterial outer membrane biogenesis; LPS O-antigen biosynthesis. Its pathway is bacterial outer membrane biogenesis; enterobacterial common antigen biosynthesis. Functionally, catalyzes the transfer of the GlcNAc-1-phosphate moiety from UDP-GlcNAc onto the carrier lipid undecaprenyl phosphate (C55-P), yielding GlcNAc-pyrophosphoryl-undecaprenyl (GlcNAc-PP-C55). The sequence is that of Undecaprenyl-phosphate alpha-N-acetylglucosaminyl 1-phosphate transferase from Salmonella typhi.